The following is a 486-amino-acid chain: PTS system N-acetylmuramic acid-specific EIIBC component (486 aa).

Positions 1-89 constitute a PTS EIIB type-1 domain; sequence MAKITQTMIS…NKLIESVING (89 aa). Cys28 functions as the Phosphocysteine intermediate; for EIIB activity in the catalytic mechanism. In terms of domain architecture, PTS EIIC type-1 spans 127–486; the sequence is SKFATIFTPL…FFGSKDVDLS (360 aa). 10 helical membrane passes run 129–149, 170–190, 196–216, 230–250, 268–288, 312–332, 347–367, 381–401, 411–431, and 453–473; these read FATI…LLGF, LIAY…ILIG, AFGG…LGYN, FFGY…AAII, MILT…VVIM, AAIL…QGFV, LFPI…ALYF, GAII…VTLP, IGGA…LPVG, and IFAG…VGFL.

The protein localises to the cell inner membrane. The catalysed reaction is N-acetyl-beta-D-muramate(out) + N(pros)-phospho-L-histidyl-[protein] = N-acetyl-beta-D-muramate 6-phosphate(in) + L-histidyl-[protein]. In terms of biological role, the phosphoenolpyruvate-dependent sugar phosphotransferase system (sugar PTS), a major carbohydrate active transport system, catalyzes the phosphorylation of incoming sugar substrates concomitantly with their translocation across the cell membrane. This system is involved in N-acetylmuramic acid (MurNAc) transport, yielding cytoplasmic MurNAc-6-P. Is also able to take up anhydro-N-acetylmuramic acid (anhMurNAc), but cannot phosphorylate the carbon 6, probably because of the 1,6-anhydro ring. The protein is PTS system N-acetylmuramic acid-specific EIIBC component (murP) of Vibrio vulnificus (strain YJ016).